A 208-amino-acid chain; its full sequence is Protein GrpE (208 aa).

Residues 1–25 show a composition bias toward basic and acidic residues; sequence MVDNKDFNEELKESIQEELDNETKS. The tract at residues 1–38 is disordered; the sequence is MVDNKDFNEELKESIQEELDNETKSENPNIDEEVEEVS. Over residues 29–38 the composition is skewed to acidic residues; it reads NIDEEVEEVS.

Belongs to the GrpE family. As to quaternary structure, homodimer.

Its subcellular location is the cytoplasm. In terms of biological role, participates actively in the response to hyperosmotic and heat shock by preventing the aggregation of stress-denatured proteins, in association with DnaK and GrpE. It is the nucleotide exchange factor for DnaK and may function as a thermosensor. Unfolded proteins bind initially to DnaJ; upon interaction with the DnaJ-bound protein, DnaK hydrolyzes its bound ATP, resulting in the formation of a stable complex. GrpE releases ADP from DnaK; ATP binding to DnaK triggers the release of the substrate protein, thus completing the reaction cycle. Several rounds of ATP-dependent interactions between DnaJ, DnaK and GrpE are required for fully efficient folding. The sequence is that of Protein GrpE from Clostridium perfringens (strain SM101 / Type A).